The chain runs to 339 residues: Delta(9)-fatty-acid desaturase fat-6 (339 aa).

4 helical membrane-spanning segments follow: residues 52–72 (VALF…LIFE), 77–97 (TVIF…AGAH), 195–215 (YFPL…VYFW), and 219–241 (AFIA…TWCI).

Belongs to the fatty acid desaturase type 1 family. In terms of tissue distribution, expressed in the intestine in adult worms and in all four larval stages. Additional expression in the hypodermis in all life stages.

The protein localises to the membrane. It carries out the reaction octadecanoyl-CoA + 2 Fe(II)-[cytochrome b5] + O2 + 2 H(+) = (9Z)-octadecenoyl-CoA + 2 Fe(III)-[cytochrome b5] + 2 H2O. The enzyme catalyses hexadecanoyl-CoA + 2 Fe(II)-[cytochrome b5] + O2 + 2 H(+) = (9Z)-hexadecenoyl-CoA + 2 Fe(III)-[cytochrome b5] + 2 H2O. The catalysed reaction is heptadecanoyl-CoA + 2 Fe(II)-[cytochrome b5] + O2 + 2 H(+) = (9Z)-heptadecenoyl-CoA + 2 Fe(III)-[cytochrome b5] + 2 H2O. It catalyses the reaction (11E)-octadecenoyl-CoA + 2 Fe(II)-[cytochrome b5] + O2 + 2 H(+) = (9Z,11E)-octadecadienoyl-CoA + 2 Fe(III)-[cytochrome b5] + 2 H2O. It functions in the pathway lipid metabolism; monounsaturated fatty acid biosynthesis. Its pathway is lipid metabolism; fatty acid metabolism. Functionally, delta(9)-fatty acid desaturase that acts preferentially on stearoyl-CoA (octadecanoyl-CoA) producing the monounsaturated oleoyl-CoA ((9Z)-octadecenoyl-CoA), one of the most abundant monounsaturated fatty acid in Caenorhabditis elegans phospholipids and triacylglycerols. Also acts on palmitoyl-CoA (hexadecanoyl-CoA), heptadecanoyl-CoA and (11E)-octadecenoyl-CoA (trans-vaccenoyl-CoA), the monounsaturated fatty acids (MUFAs) produced are further used as substrates to synthesize polyunsaturated fatty acids (PUFAs) by several other desaturases and elongases. Unlike plants, Caenorhabditis elegans desaturases seem to use fatty acyl-CoAs as substrates. The protein is Delta(9)-fatty-acid desaturase fat-6 (fat-6) of Caenorhabditis elegans.